The primary structure comprises 820 residues: Leucine--tRNA ligase (820 aa).

The short motif at 42–52 (PYPSGDLHMGH) is the 'HIGH' region element. A 'KMSKS' region motif is present at residues 576-580 (KMSKS). Lys579 contacts ATP.

It belongs to the class-I aminoacyl-tRNA synthetase family.

It localises to the cytoplasm. It catalyses the reaction tRNA(Leu) + L-leucine + ATP = L-leucyl-tRNA(Leu) + AMP + diphosphate. In Coxiella burnetii (strain CbuK_Q154) (Coxiella burnetii (strain Q154)), this protein is Leucine--tRNA ligase.